Here is a 499-residue protein sequence, read N- to C-terminus: Hexokinase-2, chloroplastic (499 aa).

The transit peptide at 1-30 (MSVTVSSPAGRSFHISRSPYKKISKPRVII) directs the protein to the chloroplast. Residues 39 to 490 (LAVAPILTKL…SGIGAALLAA (452 aa)) form the Hexokinase domain. The hexokinase small subdomain stretch occupies residues 94-232 (TGNEKGLFYA…GLGMQVSALV (139 aa)). Positions 108, 109, and 110 each coordinate ADP. D-glucose-binding residues include T198, K199, N233, and D234. Positions 233–479 (NDTVATLAGA…KNVVIEHSKD (247 aa)) are hexokinase large subdomain. T257 contributes to the ADP binding site. 3 residues coordinate D-glucose: N260, E288, and E318. G444 contributes to the ADP binding site.

Belongs to the hexokinase family. In terms of tissue distribution, expressed in vascular starch sheath, xylem parenchyma, guard cells and root tips.

The protein localises to the plastid. The protein resides in the chloroplast stroma. The enzyme catalyses a D-hexose + ATP = a D-hexose 6-phosphate + ADP + H(+). It carries out the reaction D-fructose + ATP = D-fructose 6-phosphate + ADP + H(+). The catalysed reaction is D-glucose + ATP = D-glucose 6-phosphate + ADP + H(+). It participates in carbohydrate metabolism; hexose metabolism. It functions in the pathway carbohydrate degradation; glycolysis; D-glyceraldehyde 3-phosphate and glycerone phosphate from D-glucose: step 1/4. In terms of biological role, fructose and glucose phosphorylating enzyme. The chain is Hexokinase-2, chloroplastic (HXK2) from Nicotiana tabacum (Common tobacco).